Reading from the N-terminus, the 137-residue chain is Large ribosomal subunit protein uL16 (137 aa).

This sequence belongs to the universal ribosomal protein uL16 family. Part of the 50S ribosomal subunit.

Binds 23S rRNA and is also seen to make contacts with the A and possibly P site tRNAs. This chain is Large ribosomal subunit protein uL16, found in Bradyrhizobium sp. (strain ORS 278).